Reading from the N-terminus, the 380-residue chain is Alpha-N-acetylneuraminate alpha-2,8-sialyltransferase ST8SIA3 (380 aa).

Residues 1–17 (MRNCKMARVASVLGLVM) are Cytoplasmic-facing. A helical; Signal-anchor for type II membrane protein transmembrane segment spans residues 18-33 (LSVALLILSLISYVSL). Topologically, residues 34–380 (KKENIFTTPK…LTKLTLSHCA (347 aa)) are lumenal. 2 N-linked (GlcNAc...) asparagine glycosylation sites follow: asparagine 93 and asparagine 113. Disulfide bonds link cysteine 162–cysteine 313 and cysteine 176–cysteine 379. Positions 167 and 190 each coordinate CMP-N-acetyl-beta-neuraminate. An N-linked (GlcNAc...) asparagine glycan is attached at asparagine 206. Residues serine 300, threonine 301, glycine 302, tryptophan 322, tyrosine 336, and histidine 337 each contribute to the CMP-N-acetyl-beta-neuraminate site. Histidine 354 acts as the Proton donor/acceptor in catalysis.

Belongs to the glycosyltransferase 29 family. As to quaternary structure, homodimer. Expressed in neurons in brain with higher expression in the striatum than in the hippocampus, cortex, and cerebellum (at protein level). Expressed in testes.

Its subcellular location is the golgi apparatus membrane. It catalyses the reaction a ganglioside GM3 (d18:1(4E)) + CMP-N-acetyl-beta-neuraminate = a ganglioside GD3 (d18:1(4E)) + CMP + H(+). It carries out the reaction a ganglioside GM3 + CMP-N-acetyl-beta-neuraminate = a ganglioside GD3 + CMP + H(+). The enzyme catalyses an N-acetyl-alpha-neuraminyl-(2-&gt;3)-beta-D-galactosyl derivative + CMP-N-acetyl-beta-neuraminate = an N-acetyl-alpha-neuraminyl-(2-&gt;8)-N-acetyl-alpha-neuraminyl-(2-&gt;3)-beta-D-galactosyl derivative + CMP + H(+). The catalysed reaction is an N-acetyl-alpha-neuraminyl-(2-&gt;3)-beta-D-galactosyl-(1-&gt;4)-N-acetyl-beta-D-glucosaminyl derivative + CMP-N-acetyl-beta-neuraminate = an alpha-Neu5Ac-(2-&gt;8)-alpha-Neu5Ac-(2-&gt;3)-beta-D-Gal-(1-&gt;4)-beta-D-GlcNAc derivative + CMP + H(+). It functions in the pathway protein modification; protein glycosylation. Its function is as follows. Catalyzes the transfer of sialic acid from a CMP-linked sialic acid donor onto a terminal alpha-2,3-, alpha-2,6-, or alpha-2,8-linked sialic acid of an acceptor, such as N-linked oligosaccharides of glycoproteins and glycolipids through alpha-2,8-linkages. Forms oligosialic and polysialic acid on various sialylated N-acetyllactosamine oligosaccharides of glycoproteins, including FETUB N-glycans, a2-HS-glycoprotein (AHSG) and alpha 2,3-sialylated glycosphingolipids, such as alpha 2,3-sialylparagloboside and ganglioside GM3 and to a lesser extent NCAM1 N-glycans. However, it is much more specific to N-linked oligosaccharides of glycoproteins than glycosphingolipids. 2,3-sialylparagloboside served as the best acceptor substrate among the glycolipids. alpha-Neu5Ac-(2-&gt;8)-alpha-Neu5Ac-(2-&gt;3)-beta-D-Gal-(1-&gt;4)-6S-D-GlcNAc and monosialyl and disialyl N-acetyllactosamines are the best acceptor substrates among glycoproteins. May play critical role in the striatum by mediating the formation of disialylated and trisialylated terminal glycotopes on N- and O-glycans of specific striatal proteins, regulating their distribution in lipid rafts, affecting their interaction with other binding partners, and subsequently modulating striatal functions. In Mus musculus (Mouse), this protein is Alpha-N-acetylneuraminate alpha-2,8-sialyltransferase ST8SIA3.